Consider the following 231-residue polypeptide: Large ribosomal subunit protein uL1 (231 aa).

It belongs to the universal ribosomal protein uL1 family. In terms of assembly, part of the 50S ribosomal subunit.

Functionally, binds directly to 23S rRNA. The L1 stalk is quite mobile in the ribosome, and is involved in E site tRNA release. Protein L1 is also a translational repressor protein, it controls the translation of the L11 operon by binding to its mRNA. The polypeptide is Large ribosomal subunit protein uL1 (Staphylococcus haemolyticus (strain JCSC1435)).